A 557-amino-acid polypeptide reads, in one-letter code: DNA replication factor Cdt1 (557 aa).

Residues M1–I25 carry the PIP-box K+4 motif motif. The interval P20 to K113 is disordered. At T28 the chain carries Phosphothreonine; by MAPK8. S30 carries the phosphoserine modification. A Cyclin-binding motif motif is present at residues R65–L67. Positions L69–E81 are enriched in low complexity. A compositionally biased stretch (pro residues) spans P82–P106. Residue S107 is modified to Phosphoserine; by MAPK8. The segment at P163–Y203 is interaction with GMNN. Phosphoserine is present on S392. Residues R397–L427 form a disordered region. The segment covering S407 to A422 has biased composition (pro residues). The segment at L463 to L557 is interaction with LRWD1.

The protein belongs to the Cdt1 family. As to quaternary structure, interacts with GMNN; the interaction inhibits the binding of the MCM complex to origins of replication. Interacts with MCM6. Interacts with CDC6; are mutually dependent on one another for loading MCM complexes onto chromatin. Interacts with PCNA. Interacts with LRWD1 during G1 phase and during mitosis. Interacts with NDC80 subunit of the NDC80 complex; leading to kinetochore localization. Interacts with KAT7. Interacts with ubiquitin-binding protein FAF1; the interaction is likely to promote CDT1 degradation. Post-translationally, two independent E3 ubiquitin ligase complexes, SCF(SKP2) and the DCX(DTL) complex, mediated CDT1 degradation in S phase. Ubiquitinated by the DCX(DTL) complex, in response to DNA damage, leading to its degradation. Ubiquitination by the DCX(DTL) complex is necessary to ensure proper cell cycle regulation and is PCNA-dependent: interacts with PCNA via its PIP-box, while the presence of the containing the 'K+4' motif in the PIP box, recruit the DCX(DTL) complex, leading to its degradation. Phosphorylation at Thr-28 by CDK2 targets CDT1 for ubiquitynation by SCF(SKP2) E3 ubiquitin ligase and subsequent degradation. The interaction with GMNN protects it against ubiquitination. Deubiquitinated by USP37. Ubiquitinated and degraded by the SCF(FBXO31) complex during the G2 phase to prevent re-replication. Phosphorylation by cyclin A-dependent kinases at Thr-28 targets CDT1 for ubiquitynation by SCF(SKP2) E3 ubiquitin ligase and subsequent degradation. Phosphorylated at Thr-28 by MAPK8/JNK1, which blocks replication licensing in response to stress. Binding to GMNN is not affected by phosphorylation.

Its subcellular location is the nucleus. It is found in the chromosome. The protein resides in the centromere. The protein localises to the kinetochore. Its function is as follows. Required for both DNA replication and mitosis. DNA replication licensing factor, required for pre-replication complex assembly. Cooperates with CDC6 and the origin recognition complex (ORC) during G1 phase of the cell cycle to promote the loading of the mini-chromosome maintenance (MCM) complex onto DNA to generate pre-replication complexes (pre-RC). Required also for mitosis by promoting stable kinetochore-microtubule attachments. Potential oncogene. This is DNA replication factor Cdt1 from Mus musculus (Mouse).